The primary structure comprises 235 residues: Phosphoribosylformylglycinamidine synthase subunit PurQ (235 aa).

The 231-residue stretch at 5-235 (FGVVVFPGSN…LLNHVSIVAA (231 aa)) folds into the Glutamine amidotransferase type-1 domain. Cysteine 88 acts as the Nucleophile in catalysis. Residues histidine 205 and glutamate 207 contribute to the active site.

Part of the FGAM synthase complex composed of 1 PurL, 1 PurQ and 2 PurS subunits.

It is found in the cytoplasm. It catalyses the reaction N(2)-formyl-N(1)-(5-phospho-beta-D-ribosyl)glycinamide + L-glutamine + ATP + H2O = 2-formamido-N(1)-(5-O-phospho-beta-D-ribosyl)acetamidine + L-glutamate + ADP + phosphate + H(+). The catalysed reaction is L-glutamine + H2O = L-glutamate + NH4(+). The protein operates within purine metabolism; IMP biosynthesis via de novo pathway; 5-amino-1-(5-phospho-D-ribosyl)imidazole from N(2)-formyl-N(1)-(5-phospho-D-ribosyl)glycinamide: step 1/2. Its function is as follows. Part of the phosphoribosylformylglycinamidine synthase complex involved in the purines biosynthetic pathway. Catalyzes the ATP-dependent conversion of formylglycinamide ribonucleotide (FGAR) and glutamine to yield formylglycinamidine ribonucleotide (FGAM) and glutamate. The FGAM synthase complex is composed of three subunits. PurQ produces an ammonia molecule by converting glutamine to glutamate. PurL transfers the ammonia molecule to FGAR to form FGAM in an ATP-dependent manner. PurS interacts with PurQ and PurL and is thought to assist in the transfer of the ammonia molecule from PurQ to PurL. This is Phosphoribosylformylglycinamidine synthase subunit PurQ from Salinibacter ruber (strain DSM 13855 / M31).